Here is a 348-residue protein sequence, read N- to C-terminus: Dihydroorotase (348 aa).

Zn(2+)-binding residues include histidine 14 and histidine 16. Substrate contacts are provided by residues 16-18 and asparagine 42; that span reads HLR. The Zn(2+) site is built by lysine 100, histidine 137, and histidine 175. Position 100 is an N6-carboxylysine (lysine 100). Histidine 137 lines the substrate pocket. Leucine 220 serves as a coordination point for substrate. Aspartate 248 contacts Zn(2+). The active site involves aspartate 248. Substrate contacts are provided by histidine 252 and alanine 264.

It belongs to the metallo-dependent hydrolases superfamily. DHOase family. Class II DHOase subfamily. In terms of assembly, homodimer. It depends on Zn(2+) as a cofactor.

The enzyme catalyses (S)-dihydroorotate + H2O = N-carbamoyl-L-aspartate + H(+). It functions in the pathway pyrimidine metabolism; UMP biosynthesis via de novo pathway; (S)-dihydroorotate from bicarbonate: step 3/3. In terms of biological role, catalyzes the reversible cyclization of carbamoyl aspartate to dihydroorotate. The protein is Dihydroorotase of Pseudomonas putida (strain ATCC 47054 / DSM 6125 / CFBP 8728 / NCIMB 11950 / KT2440).